The sequence spans 420 residues: MTTIIAFIFVFGLIVFFHELGHFLFAKRAGIMVKDFSIGFGPKIFAYRKKETQYTIRLLPIGGYVRMAGEDGEEIELKPGYRVGLELTPEETVSKIIVNGKDQYVNAQPIEVSLCDLEKELFIEGYEDYDDTKKVRYQVERDALVIDGKIETMITPYDRSFNAKSLGNRAMTIFAGPLFNFILAILIFTALAFVQGGVPSTDNTLGNVLPDGAAAEAGLKKGDEVLSINGKETKSWTDIVQNVSENPGKTLDFKIERDGKTQDIDVKPATQKENGKDVGKIGVETPMDSSFTAKITNGFTQTWNWIVQIFTILGNMFTGGFSLDMLNGPVGIYTSTQQVVQYGFMTVLNWTAVLSINLGIVNLLPLPALDGGRLMFFLYELVRGKPIDPKKEGIIHFAGFALLMVLMILVTWNDIQRAFF.

Position 18 (H18) interacts with Zn(2+). Residue E19 is part of the active site. Position 22 (H22) interacts with Zn(2+). 4 helical membrane-spanning segments follow: residues 172–194, 304–326, 347–369, and 393–412; these read TIFA…LAFV, NWIV…LDML, VLNW…LPAL, and GIIH…LVTW. In terms of domain architecture, PDZ spans 176 to 267; it reads GPLFNFILAI…DGKTQDIDVK (92 aa).

Belongs to the peptidase M50B family. Requires Zn(2+) as cofactor.

It is found in the cell membrane. The chain is Putative zinc metalloprotease Lmo1318 from Listeria monocytogenes serovar 1/2a (strain ATCC BAA-679 / EGD-e).